The primary structure comprises 1174 residues: Fanconi anemia group J protein homolog (1174 aa).

The Helicase ATP-binding domain maps to 11 to 445 (GGVKIHFPCR…KSHEPLRDVC (435 aa)). Residues 101–126 (NLDTSPHFNSPSKPSSGRNGVSTPCQ) show a composition bias toward polar residues. Disordered stretches follow at residues 101 to 160 (NLDT…EKKR) and 187 to 208 (LASE…DRKD). Positions 134-143 (LAAKLSAKKQ) are enriched in low complexity. Residues 158–175 (KKRIRPLETTQQIRKRHC) carry the Nuclear localization signal motif. Residue 185-192 (ARLASEKR) participates in ATP binding. [4Fe-4S] cluster is bound by residues Cys286, Cys301, Cys313, and Cys353. The short motif at 393 to 396 (VILD) is the DEAH box element. Residues 888–1063 (SRRHQKVTNR…SNETADTSLG (176 aa)) form an interaction with BRCA1 region. 2 stretches are compositionally biased toward polar residues: residues 923–935 (TSVS…SPEN) and 990–1001 (SRSSSPTFGKQT). 2 disordered regions span residues 923–1001 (TSVS…GKQT) and 1102–1155 (LSPG…SSHS). A phosphoserine mark is found at Ser929, Ser932, and Ser994. A compositionally biased stretch (acidic residues) spans 1138-1147 (DTNEENGELV). Lys1174 is subject to N6-acetyllysine.

Belongs to the DEAD box helicase family. DEAH subfamily. As to quaternary structure, binds directly to the BRCT domains of BRCA1. Interacts with the CIA complex components CIAO1, CIAO2B and MMS19. It depends on [4Fe-4S] cluster as a cofactor. Phosphorylated. Phosphorylation is necessary for interaction with BRCA1, and is cell-cycle regulated.

Its subcellular location is the nucleus. The protein localises to the cytoplasm. It catalyses the reaction Couples ATP hydrolysis with the unwinding of duplex DNA at the replication fork by translocating in the 5'-3' direction. This creates two antiparallel DNA single strands (ssDNA). The leading ssDNA polymer is the template for DNA polymerase III holoenzyme which synthesizes a continuous strand.. The catalysed reaction is ATP + H2O = ADP + phosphate + H(+). Its function is as follows. DNA-dependent helicase and 5' to 3' DNA helicase required for the maintenance of chromosomal stability. Acts late in the Fanconi anemia pathway, after FANCD2 ubiquitination. Involved in the repair of DNA double-strand breaks by homologous recombination in a manner that depends on its association with BRCA1. Involved in the repair of abasic sites at replication forks by promoting the degradation of DNA-protein cross-links: acts by catalyzing unfolding of HMCES DNA-protein cross-link via its helicase activity, exposing the underlying DNA and enabling cleavage of the DNA-protein adduct by the SPRTN metalloprotease. Can unwind RNA:DNA hybrids and G-quadruplex DNA. The polypeptide is Fanconi anemia group J protein homolog (Mus musculus (Mouse)).